The following is a 700-amino-acid chain: MITFVDSAAKERERESDKCLDPQLWHACAGGMVQMPPVSSKVYYFPQGHAEHAQGHGPVEFPGGRVPALVLCRVAGVRFMADPDTDEVFAKIRLVPVRANEQGYAGDADDGIGAAAAAAAQEEKPASFAKTLTQSDANNGGGFSVPRYCAETIFPRLDYSADPPVQTVLAKDVHGVVWKFRHIYRGTPRRHLLTTGWSTFVNQKKLVAGDSIVFMRTENGDLCVGIRRAKKGGVGGPEFLPPPPPPPPTPAAGGNYGGFSMFLRGDDDGNKMAAAARGKVRARVRPEEVVEAANLAVSGQPFEVVYYPRASTPEFCVKAGAVRAAMRTQWFAGMRFKMAFETEDSSRISWFMGTVSAVQVADPIRWPNSPWRLLQVSWDEPDLLQNVKRVSPWLVELVSNMPAIHLAPFSPPRKKLCVPLYPELPIDGQFPTPMFHGNPLARGVGPMCYFPDGTPAGIQGARHAQFGISLSDLHLNKLQSSLSPHGLHQLDHGMQPRIAAGLIIGHPAARDDISCLLTIGSPQNNKKSDGKKAPAQLMLFGKPILTEQQISLGDAASVDVKKSSSDGNAENTVNKSNSDVSSPRSNQNGTTDNLSCGGVPLCQDNKVLDVGLETGHCKVFMQSEDVGRTLDLSVVGSYEELYRRLADMFGIEKAELMSHVFYRDAAGALKHTGDEPFSEFTKTARRLNILTDTSGDNLAR.

Positions 128–230 (FAKTLTQSDA…DLCVGIRRAK (103 aa)) form a DNA-binding region, TF-B3. Disordered stretches follow at residues 234–254 (VGGP…AAGG) and 560–595 (VKKS…DNLS). Residues 239 to 250 (FLPPPPPPPPTP) are compositionally biased toward pro residues. The span at 565-594 (SDGNAENTVNKSNSDVSSPRSNQNGTTDNL) shows a compositional bias: polar residues. In terms of domain architecture, PB1 spans 614–697 (TGHCKVFMQS…NILTDTSGDN (84 aa)).

Belongs to the ARF family. Homodimers and heterodimers. Expressed in roots, culms, leaves and young panicles.

Its subcellular location is the nucleus. Auxin response factors (ARFs) are transcriptional factors that bind specifically to the DNA sequence 5'-TGTCTC-3' found in the auxin-responsive promoter elements (AuxREs). The protein is Auxin response factor 18 (ARF18) of Oryza sativa subsp. japonica (Rice).